A 347-amino-acid polypeptide reads, in one-letter code: UDP-3-O-acylglucosamine N-acyltransferase (347 aa).

His240 acts as the Proton acceptor in catalysis.

This sequence belongs to the transferase hexapeptide repeat family. LpxD subfamily. In terms of assembly, homotrimer.

The enzyme catalyses a UDP-3-O-[(3R)-3-hydroxyacyl]-alpha-D-glucosamine + a (3R)-hydroxyacyl-[ACP] = a UDP-2-N,3-O-bis[(3R)-3-hydroxyacyl]-alpha-D-glucosamine + holo-[ACP] + H(+). It participates in bacterial outer membrane biogenesis; LPS lipid A biosynthesis. Catalyzes the N-acylation of UDP-3-O-acylglucosamine using 3-hydroxyacyl-ACP as the acyl donor. Is involved in the biosynthesis of lipid A, a phosphorylated glycolipid that anchors the lipopolysaccharide to the outer membrane of the cell. The protein is UDP-3-O-acylglucosamine N-acyltransferase of Hydrogenovibrio crunogenus (strain DSM 25203 / XCL-2) (Thiomicrospira crunogena).